Consider the following 316-residue polypeptide: 4-hydroxy-3-methylbut-2-enyl diphosphate reductase (316 aa).

Cys18 serves as a coordination point for [4Fe-4S] cluster. The (2E)-4-hydroxy-3-methylbut-2-enyl diphosphate site is built by His47 and His80. Positions 47 and 80 each coordinate dimethylallyl diphosphate. Positions 47 and 80 each coordinate isopentenyl diphosphate. Cys102 provides a ligand contact to [4Fe-4S] cluster. Residue His130 coordinates (2E)-4-hydroxy-3-methylbut-2-enyl diphosphate. His130 serves as a coordination point for dimethylallyl diphosphate. His130 contributes to the isopentenyl diphosphate binding site. Residue Glu132 is the Proton donor of the active site. Position 171 (Thr171) interacts with (2E)-4-hydroxy-3-methylbut-2-enyl diphosphate. A [4Fe-4S] cluster-binding site is contributed by Cys201. The (2E)-4-hydroxy-3-methylbut-2-enyl diphosphate site is built by Ser229, Ser230, Asn231, and Ser274. Residues Ser229, Ser230, Asn231, and Ser274 each coordinate dimethylallyl diphosphate. Isopentenyl diphosphate is bound by residues Ser229, Ser230, Asn231, and Ser274.

Belongs to the IspH family. [4Fe-4S] cluster serves as cofactor.

It catalyses the reaction isopentenyl diphosphate + 2 oxidized [2Fe-2S]-[ferredoxin] + H2O = (2E)-4-hydroxy-3-methylbut-2-enyl diphosphate + 2 reduced [2Fe-2S]-[ferredoxin] + 2 H(+). It carries out the reaction dimethylallyl diphosphate + 2 oxidized [2Fe-2S]-[ferredoxin] + H2O = (2E)-4-hydroxy-3-methylbut-2-enyl diphosphate + 2 reduced [2Fe-2S]-[ferredoxin] + 2 H(+). Its pathway is isoprenoid biosynthesis; dimethylallyl diphosphate biosynthesis; dimethylallyl diphosphate from (2E)-4-hydroxy-3-methylbutenyl diphosphate: step 1/1. The protein operates within isoprenoid biosynthesis; isopentenyl diphosphate biosynthesis via DXP pathway; isopentenyl diphosphate from 1-deoxy-D-xylulose 5-phosphate: step 6/6. In terms of biological role, catalyzes the conversion of 1-hydroxy-2-methyl-2-(E)-butenyl 4-diphosphate (HMBPP) into a mixture of isopentenyl diphosphate (IPP) and dimethylallyl diphosphate (DMAPP). Acts in the terminal step of the DOXP/MEP pathway for isoprenoid precursor biosynthesis. The protein is 4-hydroxy-3-methylbut-2-enyl diphosphate reductase of Paracoccus denitrificans (strain Pd 1222).